An 83-amino-acid polypeptide reads, in one-letter code: uncharacterized protein (83 aa).

The next 3 helical transmembrane spans lie at 5–22, 32–49, and 56–78; these read VLLSIIIFLGINQNVYSI, IIKIVIILGIVILIFSPA, and IGTILGLACAYFTYKYIIPIFIA.

The protein localises to the cell membrane. This is an uncharacterized protein from Rickettsia prowazekii (strain Madrid E).